A 173-amino-acid polypeptide reads, in one-letter code: ATP-dependent protease subunit HslV (173 aa).

Residue T2 is part of the active site. The Na(+) site is built by G158, D161, and T164.

The protein belongs to the peptidase T1B family. HslV subfamily. In terms of assembly, a double ring-shaped homohexamer of HslV is capped on each side by a ring-shaped HslU homohexamer. The assembly of the HslU/HslV complex is dependent on binding of ATP.

It localises to the cytoplasm. It catalyses the reaction ATP-dependent cleavage of peptide bonds with broad specificity.. Allosterically activated by HslU binding. In terms of biological role, protease subunit of a proteasome-like degradation complex believed to be a general protein degrading machinery. The polypeptide is ATP-dependent protease subunit HslV (Actinobacillus succinogenes (strain ATCC 55618 / DSM 22257 / CCUG 43843 / 130Z)).